Consider the following 270-residue polypeptide: Phosphoribosylformylglycinamidine synthase subunit PurQ (270 aa).

A Glutamine amidotransferase type-1 domain is found at 5–251 (ALVLHATGTN…VIRERDSEEE (247 aa)). Residue cysteine 95 is the Nucleophile of the active site. Residues histidine 236 and glutamate 238 contribute to the active site.

As to quaternary structure, part of the FGAM synthase complex composed of 1 PurL, 1 PurQ and 2 PurS subunits.

Its subcellular location is the cytoplasm. The enzyme catalyses N(2)-formyl-N(1)-(5-phospho-beta-D-ribosyl)glycinamide + L-glutamine + ATP + H2O = 2-formamido-N(1)-(5-O-phospho-beta-D-ribosyl)acetamidine + L-glutamate + ADP + phosphate + H(+). The catalysed reaction is L-glutamine + H2O = L-glutamate + NH4(+). The protein operates within purine metabolism; IMP biosynthesis via de novo pathway; 5-amino-1-(5-phospho-D-ribosyl)imidazole from N(2)-formyl-N(1)-(5-phospho-D-ribosyl)glycinamide: step 1/2. Its function is as follows. Part of the phosphoribosylformylglycinamidine synthase complex involved in the purines biosynthetic pathway. Catalyzes the ATP-dependent conversion of formylglycinamide ribonucleotide (FGAR) and glutamine to yield formylglycinamidine ribonucleotide (FGAM) and glutamate. The FGAM synthase complex is composed of three subunits. PurQ produces an ammonia molecule by converting glutamine to glutamate. PurL transfers the ammonia molecule to FGAR to form FGAM in an ATP-dependent manner. PurS interacts with PurQ and PurL and is thought to assist in the transfer of the ammonia molecule from PurQ to PurL. The sequence is that of Phosphoribosylformylglycinamidine synthase subunit PurQ from Treponema denticola (strain ATCC 35405 / DSM 14222 / CIP 103919 / JCM 8153 / KCTC 15104).